The following is a 1295-amino-acid chain: DNA-directed RNA polymerase subunit beta' (1295 aa).

The Zn(2+) site is built by Cys60, Cys62, Cys75, and Cys78. 3 residues coordinate Mg(2+): Asp516, Asp518, and Asp520. Cys841, Cys914, Cys921, and Cys924 together coordinate Zn(2+).

Belongs to the RNA polymerase beta' chain family. As to quaternary structure, the RNAP catalytic core consists of 2 alpha, 1 beta, 1 beta' and 1 omega subunit. When a sigma factor is associated with the core the holoenzyme is formed, which can initiate transcription. Mg(2+) serves as cofactor. Requires Zn(2+) as cofactor.

It catalyses the reaction RNA(n) + a ribonucleoside 5'-triphosphate = RNA(n+1) + diphosphate. Functionally, DNA-dependent RNA polymerase catalyzes the transcription of DNA into RNA using the four ribonucleoside triphosphates as substrates. This is DNA-directed RNA polymerase subunit beta' from Dehalococcoides mccartyi (strain CBDB1).